The following is a 99-amino-acid chain: Large ribosomal subunit protein uL23 (99 aa).

This sequence belongs to the universal ribosomal protein uL23 family. Part of the 50S ribosomal subunit. Contacts protein L29, and trigger factor when it is bound to the ribosome.

One of the early assembly proteins it binds 23S rRNA. One of the proteins that surrounds the polypeptide exit tunnel on the outside of the ribosome. Forms the main docking site for trigger factor binding to the ribosome. The polypeptide is Large ribosomal subunit protein uL23 (Francisella tularensis subsp. tularensis (strain SCHU S4 / Schu 4)).